A 529-amino-acid polypeptide reads, in one-letter code: Autophagy-related protein 21 (529 aa).

A compositionally biased stretch (polar residues) spans 49–62 (NSLEDSAGCQNPTH). A disordered region spans residues 49–70 (NSLEDSAGCQNPTHSKTDSQDT). 2 WD repeats span residues 271-311 (AHHS…GKVK) and 321-361 (GHNL…SDIC). The short motif at 318 to 322 (LRRGH) is the L/FRRG motif element. A disordered region spans residues 362–388 (TNENSEDRTNHNSDYEDSDGDTSKSSE). The segment covering 366-375 (SEDRTNHNSD) has biased composition (basic and acidic residues).

It belongs to the WD repeat PROPPIN family.

Its subcellular location is the cytoplasm. The protein resides in the membrane. It is found in the vacuole membrane. In terms of biological role, required for cytoplasm to vacuole transport (Cvt) vesicles formation and mitophagy. Involved in binding of phosphatidylethanolamine to ATG8 and in recruitment of ATG8 and ATG5 to the pre-autophagosomal structure. Protects ATG8 from ARG4-mediated cleavage. This is Autophagy-related protein 21 (ATG21) from Candida albicans (strain SC5314 / ATCC MYA-2876) (Yeast).